The chain runs to 61 residues: Sec-independent protein translocase protein TatA (61 aa).

Residues 1–21 (MFSNIGFPGLILILVAVLILF) form a helical membrane-spanning segment.

It belongs to the TatA/E family. Forms a complex with TatC.

Its subcellular location is the cell membrane. In terms of biological role, part of the twin-arginine translocation (Tat) system that transports large folded proteins containing a characteristic twin-arginine motif in their signal peptide across membranes. TatA could form the protein-conducting channel of the Tat system. The protein is Sec-independent protein translocase protein TatA of Bacillus anthracis (strain A0248).